Consider the following 265-residue polypeptide: Shikimate dehydrogenase (NADP(+)) (265 aa).

Shikimate is bound by residues 15-17 and T62; that span reads SLS. The active-site Proton acceptor is the K66. E78 lines the NADP(+) pocket. 2 residues coordinate shikimate: N87 and D102. Residues 126 to 130, 150 to 155, and V210 each bind NADP(+); these read GAGGV and NRTELK. Y212 contributes to the shikimate binding site. G233 provides a ligand contact to NADP(+).

It belongs to the shikimate dehydrogenase family. In terms of assembly, homodimer.

It carries out the reaction shikimate + NADP(+) = 3-dehydroshikimate + NADPH + H(+). The protein operates within metabolic intermediate biosynthesis; chorismate biosynthesis; chorismate from D-erythrose 4-phosphate and phosphoenolpyruvate: step 4/7. Involved in the biosynthesis of the chorismate, which leads to the biosynthesis of aromatic amino acids. Catalyzes the reversible NADPH linked reduction of 3-dehydroshikimate (DHSA) to yield shikimate (SA). The sequence is that of Shikimate dehydrogenase (NADP(+)) from Pelagibacter ubique (strain HTCC1062).